The sequence spans 443 residues: UDP-N-acetylmuramate--L-alanine ligase (443 aa).

Position 110–116 (110–116) interacts with ATP; that stretch reads GAHGKTS.

Belongs to the MurCDEF family.

Its subcellular location is the cytoplasm. The catalysed reaction is UDP-N-acetyl-alpha-D-muramate + L-alanine + ATP = UDP-N-acetyl-alpha-D-muramoyl-L-alanine + ADP + phosphate + H(+). Its pathway is cell wall biogenesis; peptidoglycan biosynthesis. Functionally, cell wall formation. In Streptococcus equi subsp. zooepidemicus (strain H70), this protein is UDP-N-acetylmuramate--L-alanine ligase.